Consider the following 468-residue polypeptide: Uronate isomerase (468 aa).

It belongs to the metallo-dependent hydrolases superfamily. Uronate isomerase family.

The catalysed reaction is D-glucuronate = D-fructuronate. It carries out the reaction aldehydo-D-galacturonate = keto-D-tagaturonate. Its pathway is carbohydrate metabolism; pentose and glucuronate interconversion. This chain is Uronate isomerase, found in Bacteroides fragilis (strain ATCC 25285 / DSM 2151 / CCUG 4856 / JCM 11019 / LMG 10263 / NCTC 9343 / Onslow / VPI 2553 / EN-2).